A 205-amino-acid chain; its full sequence is RNA pyrophosphohydrolase (205 aa).

Residues Gly6 to Arg149 enclose the Nudix hydrolase domain. Positions Gly38–Gly59 match the Nudix box motif. The segment at Gly178 to Asp205 is disordered. Over residues Arg186–Gly195 the composition is skewed to basic residues.

This sequence belongs to the Nudix hydrolase family. RppH subfamily. A divalent metal cation is required as a cofactor.

Its function is as follows. Accelerates the degradation of transcripts by removing pyrophosphate from the 5'-end of triphosphorylated RNA, leading to a more labile monophosphorylated state that can stimulate subsequent ribonuclease cleavage. The sequence is that of RNA pyrophosphohydrolase from Xanthomonas campestris pv. campestris (strain 8004).